The primary structure comprises 380 residues: ATP phosphoribosyltransferase regulatory subunit (380 aa).

The protein belongs to the class-II aminoacyl-tRNA synthetase family. HisZ subfamily. In terms of assembly, heteromultimer composed of HisG and HisZ subunits.

The protein resides in the cytoplasm. Its pathway is amino-acid biosynthesis; L-histidine biosynthesis; L-histidine from 5-phospho-alpha-D-ribose 1-diphosphate: step 1/9. In terms of biological role, required for the first step of histidine biosynthesis. May allow the feedback regulation of ATP phosphoribosyltransferase activity by histidine. This chain is ATP phosphoribosyltransferase regulatory subunit, found in Thermoanaerobacter sp. (strain X514).